The following is a 127-amino-acid chain: Large ribosomal subunit protein bL17 (127 aa).

The protein belongs to the bacterial ribosomal protein bL17 family. Part of the 50S ribosomal subunit. Contacts protein L32.

In Lactobacillus johnsonii (strain CNCM I-12250 / La1 / NCC 533), this protein is Large ribosomal subunit protein bL17.